The chain runs to 601 residues: DNA ligase (601 aa).

D258 provides a ligand contact to ATP. The N6-AMP-lysine intermediate role is filled by K260. 6 residues coordinate ATP: R265, R280, E310, F350, R427, and K433. The segment at 568 to 601 is disordered; sequence DKSPEDATTTDEILEMYNKQPKKKIESPPIDESV.

This sequence belongs to the ATP-dependent DNA ligase family. It depends on Mg(2+) as a cofactor.

The enzyme catalyses ATP + (deoxyribonucleotide)n-3'-hydroxyl + 5'-phospho-(deoxyribonucleotide)m = (deoxyribonucleotide)n+m + AMP + diphosphate.. Its function is as follows. DNA ligase that seals nicks in double-stranded DNA during DNA replication, DNA recombination and DNA repair. In Saccharolobus islandicus (strain Y.N.15.51 / Yellowstone #2) (Sulfolobus islandicus), this protein is DNA ligase.